Consider the following 428-residue polypeptide: Chaperone SurA (428 aa).

The first 20 residues, 1–20 (MKNWKTLLLGIAMIANTSFA), serve as a signal peptide directing secretion. 2 consecutive PpiC domains span residues 171–272 (STEL…KVND) and 282–382 (VTEV…ELLD).

Its subcellular location is the periplasm. It catalyses the reaction [protein]-peptidylproline (omega=180) = [protein]-peptidylproline (omega=0). Chaperone involved in the correct folding and assembly of outer membrane proteins. Recognizes specific patterns of aromatic residues and the orientation of their side chains, which are found more frequently in integral outer membrane proteins. May act in both early periplasmic and late outer membrane-associated steps of protein maturation. This Salmonella choleraesuis (strain SC-B67) protein is Chaperone SurA.